The following is a 392-amino-acid chain: Probable myosin light chain kinase DDB_G0271550 (392 aa).

Residues 20–278 enclose the Protein kinase domain; it reads YEFGPEIGRG…ASQCIKHPWL (259 aa). ATP is bound by residues 26–34 and lysine 49; that span reads IGRGAFSIV. Aspartate 142 (proton acceptor) is an active-site residue. A compositionally biased stretch (polar residues) spans 317–326; it reads SQSTPNLHSA. The disordered stretch occupies residues 317–392; that stretch reads SQSTPNLHSA…NNNNNNNNNI (76 aa). The segment covering 327–392 has biased composition (low complexity); sequence NSNTNTNSLS…NNNNNNNNNI (66 aa).

It belongs to the protein kinase superfamily. CAMK Ser/Thr protein kinase family. CaMK subfamily.

It catalyses the reaction L-seryl-[myosin light chain] + ATP = O-phospho-L-seryl-[myosin light chain] + ADP + H(+). The catalysed reaction is L-threonyl-[myosin light chain] + ATP = O-phospho-L-threonyl-[myosin light chain] + ADP + H(+). In terms of biological role, may phosphorylate a specific serine in the N-terminus of a myosin light chain. The protein is Probable myosin light chain kinase DDB_G0271550 of Dictyostelium discoideum (Social amoeba).